Consider the following 226-residue polypeptide: Protein-L-isoaspartate O-methyltransferase (226 aa).

S75 is a catalytic residue.

It belongs to the methyltransferase superfamily. L-isoaspartyl/D-aspartyl protein methyltransferase family.

Its subcellular location is the cytoplasm. The catalysed reaction is [protein]-L-isoaspartate + S-adenosyl-L-methionine = [protein]-L-isoaspartate alpha-methyl ester + S-adenosyl-L-homocysteine. Its function is as follows. Catalyzes the methyl esterification of L-isoaspartyl residues in peptides and proteins that result from spontaneous decomposition of normal L-aspartyl and L-asparaginyl residues. It plays a role in the repair and/or degradation of damaged proteins. This is Protein-L-isoaspartate O-methyltransferase from Lawsonia intracellularis (strain PHE/MN1-00).